Reading from the N-terminus, the 248-residue chain is Transmembrane protein 223 (248 aa).

3 helical membrane-spanning segments follow: residues 46–68, 84–104, and 140–160; these read IFRPLVFPVRVASAFTFTSAAVA, LLAIFCGGQFLFWAYLGHFAF, and YGFTSGCLIIGGGILALALLF.

The protein belongs to the TMEM223 family.

The protein resides in the mitochondrion inner membrane. Functionally, mitochondrial ribosome-associated protein involved in the first steps of cytochrome c oxidase complex (complex IV) biogenesis. Stimulates the translation of MT-CO1 mRNA and is a constituent of early MT-CO1 assembly intermediates. This chain is Transmembrane protein 223, found in Danio rerio (Zebrafish).